Here is a 92-residue protein sequence, read N- to C-terminus: Small ribosomal subunit protein bS16 (92 aa).

It belongs to the bacterial ribosomal protein bS16 family.

This Desulforudis audaxviator (strain MP104C) protein is Small ribosomal subunit protein bS16.